A 268-amino-acid polypeptide reads, in one-letter code: Proenkephalin-A (268 aa).

The N-terminal stretch at 1-24 is a signal peptide; sequence MARFLRLCTWLLALGSCLLATVQA. Intrachain disulfides connect Cys-26-Cys-48, Cys-30-Cys-52, and Cys-33-Cys-65. Residues 163–184 are disordered; sequence TGDNRAKDSHQQESTNNDEDMS. Propeptides lie at residues 197-208 and 218-228; these read SPQLEDEAKELQ and VGRPEWWMDYQ. Ser-252 bears the Phosphoserine mark.

The protein belongs to the opioid neuropeptide precursor family. Proenkephalin-A is cleaved by CTSL to generate Met-enkephalin. In terms of processing, processed and degraded by ACE. Post-translationally, probably cleaved by ACE. Processed by ACE to generate Met-enkephalin in the nucleus accumbens of the brain. In terms of processing, the N-terminal domain contains 6 conserved cysteines thought to be involved in disulfide bonding and/or processing. In terms of tissue distribution, spermatogenic and somatic cells.

It localises to the cytoplasmic vesicle. The protein resides in the secretory vesicle. It is found in the chromaffin granule lumen. The protein localises to the secreted. In terms of biological role, neuropeptide that competes with and mimic the effects of opiate drugs. They play a role in a number of physiologic functions, including pain perception and responses to stress. Its function is as follows. Met-enkephalin-Arg-Phe neuropeptide acts as a strong ligand of Mu-type opioid receptor OPRM1. Met-enkephalin-Arg-Phe-binding to OPRM1 in the nucleus accumbens of the brain increases activation of OPRM1, leading to long-term synaptic depression of glutamate release. Functionally, increases glutamate release in the striatum and decreases GABA concentration in the striatum. Increases glutamate release in the striatum. The sequence is that of Proenkephalin-A (Penk) from Mus musculus (Mouse).